An 83-amino-acid polypeptide reads, in one-letter code: Delta-conotoxin-like MVIC (83 aa).

Residues 1 to 22 (MKLTCVMIVAVLFLTTWTFVTA) form the signal peptide. The propeptide occupies 23 to 49 (DDSRYGLKNLFPKARHEMKNPEASKLN). 3 cysteine pairs are disulfide-bonded: C54/C69, C61/C73, and C68/C78. Residues P56 and P65 each carry the 4-hydroxyproline modification.

Belongs to the conotoxin O1 superfamily. Expressed by the venom duct.

Its subcellular location is the secreted. Its function is as follows. Delta-conotoxins bind to site 6 of voltage-gated sodium channels (Nav) and inhibit the inactivation process. This chain is Delta-conotoxin-like MVIC, found in Conus magus (Magical cone).